The following is a 364-amino-acid chain: Aminomethyltransferase (364 aa).

The protein belongs to the GcvT family. The glycine cleavage system is composed of four proteins: P, T, L and H.

The enzyme catalyses N(6)-[(R)-S(8)-aminomethyldihydrolipoyl]-L-lysyl-[protein] + (6S)-5,6,7,8-tetrahydrofolate = N(6)-[(R)-dihydrolipoyl]-L-lysyl-[protein] + (6R)-5,10-methylene-5,6,7,8-tetrahydrofolate + NH4(+). In terms of biological role, the glycine cleavage system catalyzes the degradation of glycine. In Salmonella paratyphi B (strain ATCC BAA-1250 / SPB7), this protein is Aminomethyltransferase.